The primary structure comprises 145 residues: Arginine repressor (145 aa).

This sequence belongs to the ArgR family.

Its subcellular location is the cytoplasm. It functions in the pathway amino-acid biosynthesis; L-arginine biosynthesis [regulation]. Regulates arginine biosynthesis genes. The polypeptide is Arginine repressor (Streptococcus equi subsp. zooepidemicus (strain H70)).